A 179-amino-acid polypeptide reads, in one-letter code: ATP synthase subunit delta (179 aa).

Belongs to the ATPase delta chain family. In terms of assembly, F-type ATPases have 2 components, F(1) - the catalytic core - and F(0) - the membrane proton channel. F(1) has five subunits: alpha(3), beta(3), gamma(1), delta(1), epsilon(1). F(0) has three main subunits: a(1), b(2) and c(10-14). The alpha and beta chains form an alternating ring which encloses part of the gamma chain. F(1) is attached to F(0) by a central stalk formed by the gamma and epsilon chains, while a peripheral stalk is formed by the delta and b chains.

The protein localises to the cell membrane. Its function is as follows. F(1)F(0) ATP synthase produces ATP from ADP in the presence of a proton or sodium gradient. F-type ATPases consist of two structural domains, F(1) containing the extramembraneous catalytic core and F(0) containing the membrane proton channel, linked together by a central stalk and a peripheral stalk. During catalysis, ATP synthesis in the catalytic domain of F(1) is coupled via a rotary mechanism of the central stalk subunits to proton translocation. Functionally, this protein is part of the stalk that links CF(0) to CF(1). It either transmits conformational changes from CF(0) to CF(1) or is implicated in proton conduction. This is ATP synthase subunit delta from Clostridium botulinum (strain ATCC 19397 / Type A).